We begin with the raw amino-acid sequence, 630 residues long: Plastin-3 (630 aa).

2 consecutive EF-hand domains span residues 12–47 (DELD…ANMP) and 52–87 (KVRE…VKSS). Residues Asp-25, Asn-27, Asn-29, Glu-36, Asp-65, Asn-67, Asp-69, Lys-71, and Glu-76 each contribute to the Ca(2+) site. Actin-binding stretches follow at residues 109–382 (TSEL…ALTK) and 383–627 (PENQ…GRGM). Calponin-homology (CH) domains follow at residues 123–239 (EEEK…KIGL) and 267–378 (LSPE…NKYP). 4 positions are modified to phosphoserine: Ser-268, Ser-293, Ser-326, and Ser-339. Position 391 is a phosphothreonine (Thr-391). 2 consecutive Calponin-homology (CH) domains span residues 397–506 (TREE…RRYT) and 518–627 (KAND…GRGM).

Monomer. As to expression, expressed in a variety of organs, including muscle, brain, uterus and esophagus.

It localises to the cytoplasm. In terms of biological role, actin-bundling protein. This chain is Plastin-3 (PLS3), found in Homo sapiens (Human).